Reading from the N-terminus, the 103-residue chain is Cell division suppressor protein YneA (103 aa).

One can recognise a LysM domain in the interval 36–87 (VKIKVQDGDTLWSLADHVAEKKHINKEDFIEWVTENNHLQTADIKPGDELIL).

Belongs to the YneA family.

Its subcellular location is the cytoplasm. Functionally, inhibits cell division during the SOS response. Affects a later stage of the cell division protein assembly, after the assembly of the Z ring, by probably suppressing recruitment of FtsL and/or DivIC to the division machinery. The polypeptide is Cell division suppressor protein YneA (Bacillus velezensis (strain DSM 23117 / BGSC 10A6 / LMG 26770 / FZB42) (Bacillus amyloliquefaciens subsp. plantarum)).